A 240-amino-acid polypeptide reads, in one-letter code: UDP-2,3-diacylglucosamine hydrolase (240 aa).

Mn(2+) is bound by residues aspartate 8, histidine 10, aspartate 41, asparagine 79, and histidine 114. 79–80 (NR) contributes to the substrate binding site. Substrate-binding residues include aspartate 122, serine 160, asparagine 164, lysine 167, and histidine 195. Mn(2+) is bound by residues histidine 195 and histidine 197.

It belongs to the LpxH family. Requires Mn(2+) as cofactor.

It localises to the cell inner membrane. The enzyme catalyses UDP-2-N,3-O-bis[(3R)-3-hydroxytetradecanoyl]-alpha-D-glucosamine + H2O = 2-N,3-O-bis[(3R)-3-hydroxytetradecanoyl]-alpha-D-glucosaminyl 1-phosphate + UMP + 2 H(+). It functions in the pathway glycolipid biosynthesis; lipid IV(A) biosynthesis; lipid IV(A) from (3R)-3-hydroxytetradecanoyl-[acyl-carrier-protein] and UDP-N-acetyl-alpha-D-glucosamine: step 4/6. Hydrolyzes the pyrophosphate bond of UDP-2,3-diacylglucosamine to yield 2,3-diacylglucosamine 1-phosphate (lipid X) and UMP by catalyzing the attack of water at the alpha-P atom. Involved in the biosynthesis of lipid A, a phosphorylated glycolipid that anchors the lipopolysaccharide to the outer membrane of the cell. The sequence is that of UDP-2,3-diacylglucosamine hydrolase from Yersinia enterocolitica serotype O:8 / biotype 1B (strain NCTC 13174 / 8081).